A 562-amino-acid chain; its full sequence is Arylsulfatase H (562 aa).

Ca(2+) is bound by residues Asp-15, Asp-16, and Cys-55. The Nucleophile role is filled by Cys-55. Cys-55 is subject to 3-oxoalanine (Cys). Residue Lys-115 coordinates substrate. His-117 is an active-site residue. 2 consecutive transmembrane segments (helical) span residues 167–187 and 189–209; these read LWIS…PKFA and WFSV…LFFT. His-271 provides a ligand contact to substrate. Asp-323 and Asn-324 together coordinate Ca(2+). Residue Lys-348 coordinates substrate.

It belongs to the sulfatase family. It depends on Ca(2+) as a cofactor. In terms of processing, the conversion to 3-oxoalanine (also known as C-formylglycine, FGly), of a serine or cysteine residue in prokaryotes and of a cysteine residue in eukaryotes, is critical for catalytic activity.

It localises to the membrane. This Homo sapiens (Human) protein is Arylsulfatase H (ARSH).